The chain runs to 164 residues: Pyruvoyl-dependent arginine decarboxylase (164 aa).

Position 52 is a pyruvic acid (Ser) (Ser52).

It belongs to the PdaD family. The cofactor is pyruvate.

The enzyme catalyses L-arginine + H(+) = agmatine + CO2. In Methanococcus vannielii (strain ATCC 35089 / DSM 1224 / JCM 13029 / OCM 148 / SB), this protein is Pyruvoyl-dependent arginine decarboxylase.